The sequence spans 143 residues: Beta/delta-urticatoxin-Uf2b (143 aa).

The N-terminal stretch at 1–18 is a signal peptide; that stretch reads MGAIVLVALMALVASSSA. The propeptide occupies 19-80; that stretch reads FSDIEHNIMK…MMLSGRPQPN (62 aa). 6 disulfides stabilise this stretch: Cys83–Cys100, Cys90–Cys105, Cys99–Cys113, Cys115–Cys129, Cys122–Cys134, and Cys128–Cys142.

Belongs to the urticatoxin-2 family. As to expression, expressed in trichomes, that are stiff epidermal hairs located on the surface of petioles and leaves.

Its subcellular location is the secreted. Its function is as follows. Plant defense neurotoxin that causes pain and systemic symptoms in mammals via modulation of voltage-gated sodium channels (Nav). Potent modulator of human Nav1.5/SCN5A (EC(50)=55 nM), Nav1.6/SCN8A (EC(50)=0.86 nM), and Nav1.7/SCN9A (EC(50)=208 nM), where it shifts the activation threshold to more negative potentials and delays fast inactivation. Also shifts the voltage-dependence of steady-state fast inactivation of Nav1.6/SCN8A, but not that of Nav1.5/SCN5A or Nav1.7/SCN9A. On Nav1.7/SCN9A, principally acts by binding to extracellular loops of domain IV (Nav site 3). In vivo, intraplantar injection into mice causes numerous dose-dependent, immediate, and long-lasting spontaneous pain behaviors, while no swelling is observed in the injected paw. At the highest doses tested, systemic symptoms including hypokinesia and hypersalivation are observed. This is Beta/delta-urticatoxin-Uf2b from Urtica ferox (Tree nettle).